Reading from the N-terminus, the 59-residue chain is MSCPKCGSGNIAKEKTMRGWSDDYVCCDCGYNDSKDAFGERGKNEFVRINKERKGNEKS.

The sequence is that of Eag protein (eag) from Salmonella phage P22 (Bacteriophage P22).